The sequence spans 240 residues: Glutathione S-transferase theta-1 (240 aa).

Residues 2–82 (VLELYLDLLS…YLAHKYKVPD (81 aa)) form the GST N-terminal domain. Glutathione-binding positions include His-40, 53-54 (KV), and 66-67 (ES). One can recognise a GST C-terminal domain in the interval 88–223 (DLQARARVDE…ILKVRDCPPA (136 aa)).

Belongs to the GST superfamily. Theta family. Homodimer. As to expression, in liver, highest expression found in central vein limiting plate hepatocytes. In lung, expressed mainly in club cells of the bronchiolar epithelium and, at low levels, in type II alveolar cells.

It localises to the cytoplasm. The catalysed reaction is RX + glutathione = an S-substituted glutathione + a halide anion + H(+). In terms of biological role, conjugation of reduced glutathione to a wide number of exogenous and endogenous hydrophobic electrophiles. Also binds steroids, bilirubin, carcinogens and numerous organic anions. Has dichloromethane dehalogenase activity. The polypeptide is Glutathione S-transferase theta-1 (Gstt1) (Rattus norvegicus (Rat)).